Reading from the N-terminus, the 179-residue chain is Large ribosomal subunit protein uL5 (179 aa).

This sequence belongs to the universal ribosomal protein uL5 family. As to quaternary structure, part of the 50S ribosomal subunit; part of the 5S rRNA/L5/L18/L25 subcomplex. Contacts the 5S rRNA and the P site tRNA. Forms a bridge to the 30S subunit in the 70S ribosome.

Its function is as follows. This is one of the proteins that bind and probably mediate the attachment of the 5S RNA into the large ribosomal subunit, where it forms part of the central protuberance. In the 70S ribosome it contacts protein S13 of the 30S subunit (bridge B1b), connecting the 2 subunits; this bridge is implicated in subunit movement. Contacts the P site tRNA; the 5S rRNA and some of its associated proteins might help stabilize positioning of ribosome-bound tRNAs. The protein is Large ribosomal subunit protein uL5 of Nitratidesulfovibrio vulgaris (strain DSM 19637 / Miyazaki F) (Desulfovibrio vulgaris).